The following is a 419-amino-acid chain: UDP-N-acetylglucosamine 1-carboxyvinyltransferase 2 (419 aa).

Position 22–23 (22–23) interacts with phosphoenolpyruvate; it reads KN. A UDP-N-acetyl-alpha-D-glucosamine-binding site is contributed by arginine 92. Cysteine 116 (proton donor) is an active-site residue. Cysteine 116 bears the 2-(S-cysteinyl)pyruvic acid O-phosphothioketal mark. UDP-N-acetyl-alpha-D-glucosamine is bound by residues 121–125, aspartate 306, and isoleucine 328; that span reads RPIDL.

The protein belongs to the EPSP synthase family. MurA subfamily.

Its subcellular location is the cytoplasm. It carries out the reaction phosphoenolpyruvate + UDP-N-acetyl-alpha-D-glucosamine = UDP-N-acetyl-3-O-(1-carboxyvinyl)-alpha-D-glucosamine + phosphate. The protein operates within cell wall biogenesis; peptidoglycan biosynthesis. Its function is as follows. Cell wall formation. Adds enolpyruvyl to UDP-N-acetylglucosamine. This chain is UDP-N-acetylglucosamine 1-carboxyvinyltransferase 2, found in Streptococcus pyogenes serotype M18 (strain MGAS8232).